The chain runs to 85 residues: DNA-directed RNA polymerase subunit omega (85 aa).

This sequence belongs to the RNA polymerase subunit omega family. As to quaternary structure, the RNAP catalytic core consists of 2 alpha, 1 beta, 1 beta' and 1 omega subunit. When a sigma factor is associated with the core the holoenzyme is formed, which can initiate transcription.

The enzyme catalyses RNA(n) + a ribonucleoside 5'-triphosphate = RNA(n+1) + diphosphate. Its function is as follows. Promotes RNA polymerase assembly. Latches the N- and C-terminal regions of the beta' subunit thereby facilitating its interaction with the beta and alpha subunits. This chain is DNA-directed RNA polymerase subunit omega, found in Latilactobacillus sakei subsp. sakei (strain 23K) (Lactobacillus sakei subsp. sakei).